The following is a 412-amino-acid chain: Angiopoietin-related protein 4 (412 aa).

Residues 1–23 form the signal peptide; it reads MRSAPTARAALVLCAATAGLLSA. The stretch at 106 to 153 forms a coiled coil; that stretch reads ETLHSLQTQLKAQNSKIQQLFQKVAQQQRHLEKQHLRIQNLQGQLDHL. Asparagine 183 carries an N-linked (GlcNAc...) asparagine glycan. The region spanning 185-407 is the Fibrinogen C-terminal domain; it reads SRLHRLPRDC…ATTMLIQPTV (223 aa). 2 disulfides stabilise this stretch: cysteine 194-cysteine 222 and cysteine 347-cysteine 360.

As to quaternary structure, homooligomer; disulfide-linked via Cys residues in the N-terminal part of the protein. The homooligomer undergoes proteolytic processing to release the ANGPTL4 C-terminal chain, which circulates as a monomer. The homooligomer unprocessed form is able to interact with the extracellular matrix. Post-translationally, N-glycosylated. In terms of processing, forms disulfide-linked dimers and tetramers. Cleaved into a smaller N-terminal chain and a larger chain that contains the fibrinogen C-terminal domain; both cleaved and uncleaved forms are detected in the extracellular space. The cleaved form is not present within the cell.

It localises to the secreted. The protein resides in the extracellular space. Its subcellular location is the extracellular matrix. Its function is as follows. Mediates inactivation of the lipoprotein lipase LPL, and thereby plays a role in the regulation of triglyceride clearance from the blood serum and in lipid metabolism. May also play a role in regulating glucose homeostasis and insulin sensitivity. Inhibits proliferation, migration, and tubule formation of endothelial cells and reduces vascular leakage. Upon heterologous expression, inhibits the adhesion of endothelial cell to the extracellular matrix (ECM), and inhibits the reorganization of the actin cytoskeleton, formation of actin stress fibers and focal adhesions in endothelial cells that have adhered to ANGPTL4-containing ECM (in vitro). Depending on context, may modulate tumor-related angiogenesis. Mediates inactivation of the lipoprotein lipase LPL, and thereby plays an important role in the regulation of triglyceride clearance from the blood serum and in lipid metabolism. Has higher activity in LPL inactivation than the uncleaved protein. This is Angiopoietin-related protein 4 (ANGPTL4) from Sus scrofa (Pig).